A 186-amino-acid chain; its full sequence is Golgi apparatus membrane protein-like protein ECHIDNA (186 aa).

Methionine 1 carries the N-acetylmethionine modification. Transmembrane regions (helical) follow at residues 35 to 55 (ILSA…VLLA), 108 to 128 (FWWT…FSLI), and 132 to 152 (ADYL…IIGF).

This sequence belongs to the TVP23 family. As to quaternary structure, component of a trans-Golgi network (TGN)-localized ECH/YIP4 complex made of ECH, YIP4A and YIP4B. Interacts directly with YIP4A and YIP4B.

It is found in the golgi apparatus. Its subcellular location is the trans-Golgi network membrane. It localises to the early endosome membrane. In terms of biological role, mediates trans-Golgi-network trafficking and cell elongation. Required for keeping the appropriate balance between secretory trafficking and vacuolar targeting of a subset of proteins. The ECH/YIP4 complex is involved in the modulation of the trans-Golgi network (TGN)-mediated trafficking of some proteins and cell wall components (e.g. pectin and hemicellulose) to the cell wall in dark-grown hypocotyls and in secretory cells of the seed coat. The protein is Golgi apparatus membrane protein-like protein ECHIDNA of Arabidopsis thaliana (Mouse-ear cress).